The sequence spans 194 residues: MFLVDWFYNMFLWLGFFKKEAKIVIIGLGNAGKTTLLHLLVTGSLKSHIPTLRPNAESFTYGNVNFKAYDLGGQQNLRFLWKQYVPDSKTIIVFMVDSSDYNSIIESKSEIHDILGDEHLSQSPLLILGSKCDAKGHHNRENLIDLLDIRRFELGLNNSNNVPFDLIMTSSITRYGITDMLNWLDKCTDIIKNN.

Positions 2–4 match the STAR; SAR1-N-terminal activation recruitment. Required for the activation and subsequent recruitment to ER membrane motif; it reads FLV. Residues 10–14 are mediates recruitment to ER membranes; it reads MFLWL. GDP is bound by residues Asn-30, Ala-31, Gly-32, Lys-33, Thr-34, and Thr-35. Asn-30 contributes to the GTP binding site. Residues Gly-32, Lys-33, Thr-34, and Thr-35 each coordinate GTP. Mg(2+) is bound at residue Asp-70. Positions 131, 133, and 172 each coordinate GDP. The GTP site is built by Lys-131, Asp-133, and Ile-172.

Belongs to the small GTPase superfamily. SAR1 family. In terms of assembly, homodimer; upon association with membrane. Part of the coat protein complex II/COPII, composed of SEC23/24 and SEC13/31 heterodimers, that it helps recruit and assemble on endoplasmic reticulum (ER) membranes at ER exit sites.

Its subcellular location is the endoplasmic reticulum membrane. The protein resides in the golgi apparatus. The protein localises to the golgi stack membrane. It is found in the cytoplasm. It localises to the cytosol. It carries out the reaction GTP + H2O = GDP + phosphate + H(+). With respect to regulation, small GTPases activation is mediated by guanine exchange factors (GEF), while inactivation through hydrolysis of the bound GTP is stimulated by GTPase activating proteins (GAP). Small GTPase that cycles between an active GTP-bound and an inactive GDP-bound state and mainly functions in vesicle-mediated endoplasmic reticulum (ER) to Golgi transport. The active GTP-bound form inserts into the endoplasmic reticulum membrane where it recruits the remainder of the coat protein complex II/COPII. The coat protein complex II assembling and polymerizing on endoplasmic reticulum membrane is responsible for both the sorting of cargos and the deformation and budding of membranes into vesicles destined to the Golgi. The polypeptide is Small COPII coat GTPase SAR1B (sarB) (Dictyostelium discoideum (Social amoeba)).